We begin with the raw amino-acid sequence, 166 residues long: RNA polymerase sigma factor SigV (166 aa).

Residues aspartate 38–valine 51 carry the Polymerase core binding motif. Residues leucine 131–tyrosine 150 constitute a DNA-binding region (H-T-H motif).

Belongs to the sigma-70 factor family. ECF subfamily. As to quaternary structure, interacts with RsiV.

In terms of biological role, sigma factors are initiation factors that promote the attachment of RNA polymerase to specific initiation sites and are then released. Positively regulates the expression of proteins involved in stress responses against bacitracin, paraquat and tellurite. The sequence is that of RNA polymerase sigma factor SigV (sigV) from Bacillus subtilis (strain 168).